An 89-amino-acid chain; its full sequence is Small ribosomal subunit protein uS15 (89 aa).

The protein belongs to the universal ribosomal protein uS15 family. As to quaternary structure, part of the 30S ribosomal subunit. Forms a bridge to the 50S subunit in the 70S ribosome, contacting the 23S rRNA.

Functionally, one of the primary rRNA binding proteins, it binds directly to 16S rRNA where it helps nucleate assembly of the platform of the 30S subunit by binding and bridging several RNA helices of the 16S rRNA. In terms of biological role, forms an intersubunit bridge (bridge B4) with the 23S rRNA of the 50S subunit in the ribosome. This Rhodococcus erythropolis (strain PR4 / NBRC 100887) protein is Small ribosomal subunit protein uS15.